The sequence spans 90 residues: Mitochondrial import inner membrane translocase subunit TIM8 (90 aa).

The Twin CX3C motif motif lies at 44–70 (CFKKCNANKPITSGTLDSSEEQCLTNC). 2 disulfides stabilise this stretch: Cys44-Cys70 and Cys48-Cys66.

It belongs to the small Tim family. As to quaternary structure, heterohexamer; composed of 3 copies of TIM8 and 3 copies of TIM13, named soluble 70 kDa complex. Associates with the TIM22 complex, whose core is composed of TIM22 and TIM54. Interacts with the transmembrane regions of multi-pass transmembrane proteins in transit.

The protein localises to the mitochondrion inner membrane. Its function is as follows. Mitochondrial intermembrane chaperone that participates in the import and insertion of some multi-pass transmembrane proteins into the mitochondrial inner membrane. Also required for the transfer of beta-barrel precursors from the TOM complex to the sorting and assembly machinery (SAM complex) of the outer membrane. Acts as a chaperone-like protein that protects the hydrophobic precursors from aggregation and guide them through the mitochondrial intermembrane space. The TIM8-TIM13 complex is non essential and only mediates the import of few proteins, while the predominant TIM9-TIM10 70 kDa complex is crucial and mediates the import of much more proteins. The protein is Mitochondrial import inner membrane translocase subunit TIM8 (TIM8) of Debaryomyces hansenii (strain ATCC 36239 / CBS 767 / BCRC 21394 / JCM 1990 / NBRC 0083 / IGC 2968) (Yeast).